Reading from the N-terminus, the 258-residue chain is Glutamate racemase (258 aa).

Substrate-binding positions include 11–12 (DS) and 43–44 (YG). The Proton donor/acceptor role is filled by Cys-74. 75–76 (NT) contributes to the substrate binding site. Cys-182 functions as the Proton donor/acceptor in the catalytic mechanism. 183-184 (TH) is a substrate binding site.

The protein belongs to the aspartate/glutamate racemases family.

It catalyses the reaction L-glutamate = D-glutamate. It participates in cell wall biogenesis; peptidoglycan biosynthesis. In terms of biological role, provides the (R)-glutamate required for cell wall biosynthesis. The polypeptide is Glutamate racemase (Leptospira borgpetersenii serovar Hardjo-bovis (strain JB197)).